The following is a 176-amino-acid chain: Inorganic pyrophosphatase (176 aa).

3 residues coordinate substrate: Lys30, Arg44, and Tyr56. 3 residues coordinate Mg(2+): Asp66, Asp71, and Asp103. Residue Tyr142 participates in substrate binding.

This sequence belongs to the PPase family. As to quaternary structure, homohexamer. The cofactor is Mg(2+).

It localises to the cytoplasm. It catalyses the reaction diphosphate + H2O = 2 phosphate + H(+). Functionally, catalyzes the hydrolysis of inorganic pyrophosphate (PPi) forming two phosphate ions. The chain is Inorganic pyrophosphatase from Vibrio parahaemolyticus serotype O3:K6 (strain RIMD 2210633).